A 280-amino-acid chain; its full sequence is 3-methyl-2-oxobutanoate hydroxymethyltransferase (280 aa).

Residues D60 and D99 each coordinate Mg(2+). 3-methyl-2-oxobutanoate contacts are provided by residues 60 to 61 (DS), D99, and K129. E131 is a Mg(2+) binding site. E198 (proton acceptor) is an active-site residue.

Belongs to the PanB family. In terms of assembly, homodecamer; pentamer of dimers. The cofactor is Mg(2+).

It is found in the cytoplasm. The enzyme catalyses 3-methyl-2-oxobutanoate + (6R)-5,10-methylene-5,6,7,8-tetrahydrofolate + H2O = 2-dehydropantoate + (6S)-5,6,7,8-tetrahydrofolate. It participates in cofactor biosynthesis; (R)-pantothenate biosynthesis; (R)-pantoate from 3-methyl-2-oxobutanoate: step 1/2. Its function is as follows. Catalyzes the reversible reaction in which hydroxymethyl group from 5,10-methylenetetrahydrofolate is transferred onto alpha-ketoisovalerate to form ketopantoate. This Thermobifida fusca (strain YX) protein is 3-methyl-2-oxobutanoate hydroxymethyltransferase.